The following is a 243-amino-acid chain: Probable transcriptional regulatory protein Bpet3099 (243 aa).

The disordered stretch occupies residues 1-21; the sequence is MAGHSKWANIQHRKGRQDAKR.

The protein belongs to the TACO1 family.

Its subcellular location is the cytoplasm. This is Probable transcriptional regulatory protein Bpet3099 from Bordetella petrii (strain ATCC BAA-461 / DSM 12804 / CCUG 43448).